The sequence spans 75 residues: Microcin H47 (75 aa).

Positions 1-15 (MREITESQLRYISGA) are excised as a propeptide. A helical membrane pass occupies residues 30–50 (AIVGALAGIPGGPLGVVVGAV).

Its subcellular location is the secreted. It is found in the host cell membrane. Functionally, bactericidal antibiotic. Active on bacteria phylogenetically related to the producing strain. The polypeptide is Microcin H47 (mchB) (Escherichia coli O6:H1 (strain CFT073 / ATCC 700928 / UPEC)).